We begin with the raw amino-acid sequence, 250 residues long: uncharacterized protein (250 aa).

Disordered stretches follow at residues 85–107 and 158–198; these read NQFP…QSEP and EPVP…AKVP. Low complexity predominate over residues 167 to 176; it reads PAVEQPQVKQ.

This is an uncharacterized protein from Mycoplasma pneumoniae (strain ATCC 29342 / M129 / Subtype 1) (Mycoplasmoides pneumoniae).